A 107-amino-acid polypeptide reads, in one-letter code: Ig kappa chain V-VI region NQ5-78.2.6 (107 aa).

The tract at residues 1–23 (QILLTQSPAIMSASPGQKVTMTC) is framework-1. Residues Cys23 and Cys87 are joined by a disulfide bond. Residues 24-33 (SASSSVSYMH) are complementarity-determining-1. Residues 34 to 48 (WYQQKSGTSPKRWIY) form a framework-2 region. Residues 49 to 55 (DTSKLAS) form a complementarity-determining-2 region. Residues 56-87 (GVPARFXGSGSATSYSLTITSMQAEDAATYYC) form a framework-3 region. Positions 88–96 (QQWSSNPLT) are complementarity-determining-3. Residues 97–106 (FGSGTKLEXK) form a framework-4 region.

Anti-2-phenyl oxazolone (PHOX) Antibody. The polypeptide is Ig kappa chain V-VI region NQ5-78.2.6 (Mus musculus (Mouse)).